Consider the following 549-residue polypeptide: Glucose-6-phosphate isomerase 1 (549 aa).

Glutamate 358 acts as the Proton donor in catalysis. Active-site residues include histidine 389 and lysine 513.

It belongs to the GPI family.

The protein resides in the cytoplasm. The enzyme catalyses alpha-D-glucose 6-phosphate = beta-D-fructose 6-phosphate. The protein operates within carbohydrate biosynthesis; gluconeogenesis. It participates in carbohydrate degradation; glycolysis; D-glyceraldehyde 3-phosphate and glycerone phosphate from D-glucose: step 2/4. In terms of biological role, catalyzes the reversible isomerization of glucose-6-phosphate to fructose-6-phosphate. This is Glucose-6-phosphate isomerase 1 from Streptomyces avermitilis (strain ATCC 31267 / DSM 46492 / JCM 5070 / NBRC 14893 / NCIMB 12804 / NRRL 8165 / MA-4680).